Consider the following 372-residue polypeptide: uncharacterized protein (372 aa).

In terms of domain architecture, PNPLA spans 38 to 270; it reads FFIEGGGTKG…ANNIPLDYLI (233 aa). The GXGXXG signature appears at 42–47; it reads GGGTKG. The short motif at 74–78 is the GXSXG element; it reads GTSVG. Ser76 functions as the Nucleophile in the catalytic mechanism. Catalysis depends on Asp257, which acts as the Proton acceptor. The DGA/G signature appears at 257 to 259; that stretch reads DGG.

Functionally, probable lipid hydrolase. This is an uncharacterized protein from Acanthamoeba polyphaga (Amoeba).